A 577-amino-acid polypeptide reads, in one-letter code: Proline--tRNA ligase (577 aa).

This sequence belongs to the class-II aminoacyl-tRNA synthetase family. ProS type 1 subfamily. In terms of assembly, homodimer.

The protein resides in the cytoplasm. The enzyme catalyses tRNA(Pro) + L-proline + ATP = L-prolyl-tRNA(Pro) + AMP + diphosphate. Catalyzes the attachment of proline to tRNA(Pro) in a two-step reaction: proline is first activated by ATP to form Pro-AMP and then transferred to the acceptor end of tRNA(Pro). As ProRS can inadvertently accommodate and process non-cognate amino acids such as alanine and cysteine, to avoid such errors it has two additional distinct editing activities against alanine. One activity is designated as 'pretransfer' editing and involves the tRNA(Pro)-independent hydrolysis of activated Ala-AMP. The other activity is designated 'posttransfer' editing and involves deacylation of mischarged Ala-tRNA(Pro). The misacylated Cys-tRNA(Pro) is not edited by ProRS. The sequence is that of Proline--tRNA ligase from Helicobacter pylori (strain ATCC 700392 / 26695) (Campylobacter pylori).